The following is a 296-amino-acid chain: Elongation factor Ts (296 aa).

The tract at residues 81 to 84 (TDFV) is involved in Mg(2+) ion dislocation from EF-Tu.

The protein belongs to the EF-Ts family.

The protein localises to the cytoplasm. Its function is as follows. Associates with the EF-Tu.GDP complex and induces the exchange of GDP to GTP. It remains bound to the aminoacyl-tRNA.EF-Tu.GTP complex up to the GTP hydrolysis stage on the ribosome. The protein is Elongation factor Ts of Ruthia magnifica subsp. Calyptogena magnifica.